Consider the following 183-residue polypeptide: MTKQPEDWLDDVPGDDVEDEDDEIIWVSKSEIKRDAEELKRLGAELVDLGKNALDKIPLDTDLRDAIELAQRIKKEGRRRQLQLIGKMLRNRDVDPIRQALDKLKNRHNQQVALFHKLEQIRDRLIDDGDDAVAEVLNLWPDADRQQLRSLIRNAKKEKEGNKPPKSARLIFQYLRELAENEG.

The protein belongs to the DarP family.

It localises to the cytoplasm. Functionally, member of a network of 50S ribosomal subunit biogenesis factors which assembles along the 30S-50S interface, preventing incorrect 23S rRNA structures from forming. Promotes peptidyl transferase center (PTC) maturation. The chain is Dual-action ribosomal maturation protein DarP from Klebsiella pneumoniae (strain 342).